We begin with the raw amino-acid sequence, 751 residues long: Probable alpha-galactosidase C (751 aa).

An N-terminal signal peptide occupies residues 1 to 27 (MFGSPKRAALAAASLLAIFGNGPSVMA). Asn-49, Asn-57, Asn-162, Asn-186, Asn-194, Asn-366, Asn-433, Asn-452, and Asn-500 each carry an N-linked (GlcNAc...) asparagine glycan. The active-site Nucleophile is the Asp-510. Residue Asp-572 is the Proton donor of the active site. Asn-720 carries an N-linked (GlcNAc...) asparagine glycan.

This sequence belongs to the glycosyl hydrolase 36 family. Homotetramer. Mg(2+) serves as cofactor. Requires NAD(+) as cofactor.

The protein localises to the secreted. The catalysed reaction is Hydrolysis of terminal, non-reducing alpha-D-galactose residues in alpha-D-galactosides, including galactose oligosaccharides, galactomannans and galactolipids.. Functionally, hydrolyzes a variety of simple alpha-D-galactoside as well as more complex molecules such as oligosaccharides and polysaccharides. The polypeptide is Probable alpha-galactosidase C (aglC) (Aspergillus flavus (strain ATCC 200026 / FGSC A1120 / IAM 13836 / NRRL 3357 / JCM 12722 / SRRC 167)).